Here is a 338-residue protein sequence, read N- to C-terminus: Mitochondrial amidoxime reducing component 2 (338 aa).

Residues 1-35 constitute a mitochondrion transit peptide; it reads MGSSSSTALARLGLPGQPRSTWLGVAALGLAAVAL. Residues Lys59, Lys138, and Lys144 each participate in a glycyl lysine isopeptide (Lys-Gly) (interchain with G-Cter in ubiquitin) cross-link. The residue at position 156 (Lys156) is an N6-acetyllysine; alternate. Lys156 participates in a covalent cross-link: Glycyl lysine isopeptide (Lys-Gly) (interchain with G-Cter in ubiquitin); alternate. Residues Lys173, Lys187, Lys289, and Lys296 each participate in a glycyl lysine isopeptide (Lys-Gly) (interchain with G-Cter in ubiquitin) cross-link. The 149-residue stretch at 188 to 336 folds into the MOSC domain; it reads GRTTKKLYPS…LRVGDPVYRM (149 aa).

As to quaternary structure, component of a complex composed of cytochrome b5, NADH-cytochrome b5 reductase (CYB5R3) and MTARC2. Mo-molybdopterin serves as cofactor. Post-translationally, ubiquitinated by PRKN during mitophagy, leading to its degradation and enhancement of mitophagy. Deubiquitinated by USP30.

The protein localises to the mitochondrion outer membrane. The protein resides in the peroxisome. The enzyme catalyses N(omega)-hydroxy-L-arginine + 2 Fe(II)-[cytochrome b5] + 2 H(+) = L-arginine + 2 Fe(III)-[cytochrome b5] + H2O. Catalyzes the reduction of N-oxygenated molecules, acting as a counterpart of cytochrome P450 and flavin-containing monooxygenases in metabolic cycles. As a component of prodrug-converting system, reduces a multitude of N-hydroxylated prodrugs particularly amidoximes, leading to increased drug bioavailability. May be involved in mitochondrial N(omega)-hydroxy-L-arginine (NOHA) reduction, regulating endogenous nitric oxide levels and biosynthesis. Postulated to cleave the N-OH bond of N-hydroxylated substrates in concert with electron transfer from NADH to cytochrome b5 reductase then to cytochrome b5, the ultimate electron donor that primes the active site for substrate reduction. The polypeptide is Mitochondrial amidoxime reducing component 2 (Mtarc2) (Rattus norvegicus (Rat)).